The following is a 424-amino-acid chain: Dihydroorotase (424 aa).

Zn(2+)-binding residues include His61 and His63. Substrate is bound by residues 63–65 and Asn95; that span reads HLR. The Zn(2+) site is built by Asp153, His180, and His233. Asn279 provides a ligand contact to substrate. Asp306 is a binding site for Zn(2+). The active site involves Asp306. Residue His310 participates in substrate binding.

This sequence belongs to the metallo-dependent hydrolases superfamily. DHOase family. Class I DHOase subfamily. Zn(2+) is required as a cofactor.

It carries out the reaction (S)-dihydroorotate + H2O = N-carbamoyl-L-aspartate + H(+). It participates in pyrimidine metabolism; UMP biosynthesis via de novo pathway; (S)-dihydroorotate from bicarbonate: step 3/3. Its function is as follows. Catalyzes the reversible cyclization of carbamoyl aspartate to dihydroorotate. This chain is Dihydroorotase, found in Pelobacter propionicus (strain DSM 2379 / NBRC 103807 / OttBd1).